The following is a 172-amino-acid chain: Co-chaperone protein HscB homolog (172 aa).

The region spanning 2–74 (NYFELFGLVE…LRRAEYLLSL (73 aa)) is the J domain.

It belongs to the HscB family. Interacts with HscA and stimulates its ATPase activity.

In terms of biological role, co-chaperone involved in the maturation of iron-sulfur cluster-containing proteins. Seems to help targeting proteins to be folded toward HscA. The protein is Co-chaperone protein HscB homolog of Aeromonas hydrophila subsp. hydrophila (strain ATCC 7966 / DSM 30187 / BCRC 13018 / CCUG 14551 / JCM 1027 / KCTC 2358 / NCIMB 9240 / NCTC 8049).